Reading from the N-terminus, the 601-residue chain is Glutathione-regulated potassium-efflux system protein KefB (601 aa).

13 helical membrane-spanning segments follow: residues 4 to 24, 29 to 49, 55 to 75, 87 to 107, 115 to 135, 152 to 172, 177 to 197, 207 to 227, 230 to 250, 268 to 288, 291 to 311, 324 to 344, and 356 to 376; these read SDFL…VPLA, IGAV…GLGF, EILH…GLEL, IFGV…GLLM, AAVV…LQLM, VLLF…LLAG, HFDW…LIGG, FIAA…LVLG, LFMD…GVLL, GLLL…GVLY, LLWV…VLYL, MQFA…FSTA, and ALLL…MKLV. The RCK N-terminal domain occupies 400–519; that stretch reads KPQVIVVGFG…AGVTQFSRET (120 aa).

The protein belongs to the monovalent cation:proton antiporter 2 (CPA2) transporter (TC 2.A.37) family. KefB subfamily. As to quaternary structure, interacts with the regulatory subunit KefG.

Its subcellular location is the cell inner membrane. Functionally, pore-forming subunit of a potassium efflux system that confers protection against electrophiles. Catalyzes K(+)/H(+) antiport. This Escherichia coli (strain ATCC 8739 / DSM 1576 / NBRC 3972 / NCIMB 8545 / WDCM 00012 / Crooks) protein is Glutathione-regulated potassium-efflux system protein KefB.